Consider the following 477-residue polypeptide: Bifunctional protein HldE (477 aa).

Residues 1–318 (MKVTLPEFER…ENAVRGRADT (318 aa)) form a ribokinase region. The residue at position 179 (lysine 179) is an N6-acetyllysine. Position 195 to 198 (195 to 198 (NLSE)) interacts with ATP. Aspartate 264 is an active-site residue. The segment at 344-477 (MTNGVFDILH…IKKIQQDKKG (134 aa)) is cytidylyltransferase.

The protein in the N-terminal section; belongs to the carbohydrate kinase PfkB family. This sequence in the C-terminal section; belongs to the cytidylyltransferase family. In terms of assembly, homodimer.

It carries out the reaction D-glycero-beta-D-manno-heptose 7-phosphate + ATP = D-glycero-beta-D-manno-heptose 1,7-bisphosphate + ADP + H(+). The enzyme catalyses D-glycero-beta-D-manno-heptose 1-phosphate + ATP + H(+) = ADP-D-glycero-beta-D-manno-heptose + diphosphate. The protein operates within nucleotide-sugar biosynthesis; ADP-L-glycero-beta-D-manno-heptose biosynthesis; ADP-L-glycero-beta-D-manno-heptose from D-glycero-beta-D-manno-heptose 7-phosphate: step 1/4. Its pathway is nucleotide-sugar biosynthesis; ADP-L-glycero-beta-D-manno-heptose biosynthesis; ADP-L-glycero-beta-D-manno-heptose from D-glycero-beta-D-manno-heptose 7-phosphate: step 3/4. It functions in the pathway bacterial outer membrane biogenesis; LPS core biosynthesis. Its function is as follows. Catalyzes the phosphorylation of D-glycero-D-manno-heptose 7-phosphate at the C-1 position to selectively form D-glycero-beta-D-manno-heptose-1,7-bisphosphate. Catalyzes the ADP transfer from ATP to D-glycero-beta-D-manno-heptose 1-phosphate, yielding ADP-D-glycero-beta-D-manno-heptose. This Escherichia coli O157:H7 protein is Bifunctional protein HldE.